The sequence spans 79 residues: Cytochrome c oxidase assembly factor 6 homolog (79 aa).

One can recognise a CHCH domain in the interval 9-52; the sequence is RQACWGARDEYWKCLDENTEDASKCKKLRSSFESSCPQQWIKYF. Positions 12 to 22 match the Cx9C motif motif; that stretch reads CWGARDEYWKC. 2 disulfide bridges follow: C12-C44 and C22-C33. A Cx10C motif motif is present at residues 33 to 44; the sequence is CKKLRSSFESSC.

Belongs to the cytochrome c oxidase subunit 6B family. In terms of assembly, found in a complex with TMEM177, COX20, MT-CO2/COX2, COX18, SCO1 and SCO2. Interacts with COA1, MT-CO2/COX2, SCO1, SCO2 and COX20. Interacts with COX20 in a MT-CO2/COX2- and COX18-dependent manner. Interacts with COX16.

Its subcellular location is the mitochondrion intermembrane space. Involved in the maturation of the mitochondrial respiratory chain complex IV subunit MT-CO2/COX2. Thereby, may regulate early steps of complex IV assembly. Mitochondrial respiratory chain complex IV or cytochrome c oxidase is the component of the respiratory chain that catalyzes the transfer of electrons from intermembrane space cytochrome c to molecular oxygen in the matrix and as a consequence contributes to the proton gradient involved in mitochondrial ATP synthesis. May also be required for efficient formation of respiratory supercomplexes comprised of complexes III and IV. The protein is Cytochrome c oxidase assembly factor 6 homolog (COA6) of Bos taurus (Bovine).